The sequence spans 332 residues: Ribosomal RNA small subunit methyltransferase H (332 aa).

S-adenosyl-L-methionine-binding positions include 39–41 (GGY), aspartate 56, phenylalanine 83, aspartate 100, and glutamine 107.

Belongs to the methyltransferase superfamily. RsmH family.

Its subcellular location is the cytoplasm. The catalysed reaction is cytidine(1402) in 16S rRNA + S-adenosyl-L-methionine = N(4)-methylcytidine(1402) in 16S rRNA + S-adenosyl-L-homocysteine + H(+). Functionally, specifically methylates the N4 position of cytidine in position 1402 (C1402) of 16S rRNA. In Bartonella grahamii (strain as4aup), this protein is Ribosomal RNA small subunit methyltransferase H.